Consider the following 325-residue polypeptide: Elongation factor P--(R)-beta-lysine ligase (325 aa).

76–78 (SPE) provides a ligand contact to substrate. Residues 100–102 (RNE) and Asn109 each bind ATP. Substrate is bound at residue Tyr118. ATP is bound at residue 244-245 (EL). Glu251 is a substrate binding site. Residue Gly300 participates in ATP binding.

Belongs to the class-II aminoacyl-tRNA synthetase family. EpmA subfamily. As to quaternary structure, homodimer.

It catalyses the reaction D-beta-lysine + L-lysyl-[protein] + ATP = N(6)-((3R)-3,6-diaminohexanoyl)-L-lysyl-[protein] + AMP + diphosphate + H(+). Functionally, with EpmB is involved in the beta-lysylation step of the post-translational modification of translation elongation factor P (EF-P). Catalyzes the ATP-dependent activation of (R)-beta-lysine produced by EpmB, forming a lysyl-adenylate, from which the beta-lysyl moiety is then transferred to the epsilon-amino group of a conserved specific lysine residue in EF-P. The chain is Elongation factor P--(R)-beta-lysine ligase from Enterobacter sp. (strain 638).